The primary structure comprises 349 residues: Interferon regulatory factor 2 (349 aa).

Residues 5 to 113 (RMRMRPWLEE…NAFRVYRMLP (109 aa)) constitute a DNA-binding region (IRF tryptophan pentad repeat). N6-acetyllysine occurs at positions 75 and 78. Residue K137 forms a Glycyl lysine isopeptide (Lys-Gly) (interchain with G-Cter in SUMO); alternate linkage. Residue K137 forms a Glycyl lysine isopeptide (Lys-Gly) (interchain with G-Cter in SUMO2); alternate linkage. Residue K166 forms a Glycyl lysine isopeptide (Lys-Gly) (interchain with G-Cter in SUMO) linkage. S225 bears the Phosphoserine mark. Residues 230 to 239 (YAESETTDSV) are compositionally biased toward polar residues. The interval 230 to 253 (YAESETTDSVASDEENAEGRPHWR) is disordered. A Glycyl lysine isopeptide (Lys-Gly) (interchain with G-Cter in SUMO2) cross-link involves residue K260. K293 participates in a covalent cross-link: Glycyl lysine isopeptide (Lys-Gly) (interchain with G-Cter in SUMO). The disordered stretch occupies residues 303–349 (SSWPPFTDLPLPAPVTPTPSSSRPDRETRASVIKKTSDITQARVKSC).

The protein belongs to the IRF family. In terms of assembly, interacts with BRD7, IRF2BP1 and IRF2BP2. Interacts with CREBBP in growing cells; the interaction acetylates IRF2 and regulates IRF2-dependent H4 promoter activity. Acetylated by CBP/ p300 during cell-growth. Acetylation on Lys-75 is required for stimulation of H4 promoter activity. Post-translationally, the major sites of sumoylation are Lys-137 and Lys-293. Sumoylation with SUMO1 increases its transcriptional repressor activity on IRF1 and diminishes its ability to activate ISRE and H4 promoter.

The protein localises to the nucleus. Specifically binds to the upstream regulatory region of type I IFN and IFN-inducible MHC class I genes (the interferon consensus sequence (ICS)) and represses those genes. Also acts as an activator for several genes including H4 and IL7. Constitutively binds to the ISRE promoter to activate IL7. Involved in cell cycle regulation through binding the site II (HiNF-M) promoter region of H4 and activating transcription during cell growth. Antagonizes IRF1 transcriptional activation. The chain is Interferon regulatory factor 2 (Irf2) from Mus musculus (Mouse).